A 745-amino-acid chain; its full sequence is Elongation factor G, mitochondrial (745 aa).

The tr-type G domain maps to 40–317 (ERIRNIGISA…AVLDYLPNPG (278 aa)). Residues 49 to 56 (AHIDSGKT), 116 to 120 (DTPGH), and 170 to 173 (NKLD) contribute to the GTP site.

This sequence belongs to the TRAFAC class translation factor GTPase superfamily. Classic translation factor GTPase family. EF-G/EF-2 subfamily.

The protein resides in the mitochondrion. The protein operates within protein biosynthesis; polypeptide chain elongation. Its function is as follows. Mitochondrial GTPase that catalyzes the GTP-dependent ribosomal translocation step during translation elongation. During this step, the ribosome changes from the pre-translocational (PRE) to the post-translocational (POST) state as the newly formed A-site-bound peptidyl-tRNA and P-site-bound deacylated tRNA move to the P and E sites, respectively. Catalyzes the coordinated movement of the two tRNA molecules, the mRNA and conformational changes in the ribosome. Essential during development as it acts as a retrograde signal from mitochondria to the nucleus to slow down cell proliferation if mitochondrial energy output is low. The polypeptide is Elongation factor G, mitochondrial (Drosophila melanogaster (Fruit fly)).